Consider the following 100-residue polypeptide: Large ribosomal subunit protein bL28 (100 aa).

It belongs to the bacterial ribosomal protein bL28 family.

The polypeptide is Large ribosomal subunit protein bL28 (Gluconobacter oxydans (strain 621H) (Gluconobacter suboxydans)).